The chain runs to 930 residues: RNA-binding protein 10 (930 aa).

Composition is skewed to basic and acidic residues over residues 1–14 (MEYE…DRTG) and 21–45 (RSQD…RSYP). The segment at 1 to 127 (MEYERRGGRG…EDEEEEEEKA (127 aa)) is disordered. Over residues 59–70 (DSSEEQSAEDSY) the composition is skewed to acidic residues. 2 positions are modified to phosphoserine: serine 61 and serine 89. Residues 80–89 (RRRRRRHRHS) are compositionally biased toward basic residues. Residues 98–111 (RDGDYRDQDYRTEQ) show a composition bias toward basic and acidic residues. Residues 112-125 (GEEEEEEDEEEEEE) are compositionally biased toward acidic residues. One can recognise an RRM 1 domain in the interval 129 to 209 (NIVMLRMLPQ…QKVSMHYSDP (81 aa)). The segment at 212–242 (KINEDWLCNKCGVQNFKRREKCFKCGVPKSE) adopts a RanBP2-type zinc-finger fold. Positions 300-384 (DTIILRNLNP…KTINVEFAKG (85 aa)) constitute an RRM 2 domain. Lysine 383 carries the N6-acetyllysine modification. Disordered stretches follow at residues 464 to 487 (GPGM…EAGA), 503 to 522 (APGL…TATN), 537 to 566 (ELQS…QYPV), 620 to 646 (EQSA…HKTK), and 712 to 753 (DLPK…EEKL). Polar residues predominate over residues 507 to 522 (YQQSAEGSSGQSTATN). The segment covering 540–562 (SPTQPSSSAFPPATSPTAPEAYS) has biased composition (low complexity). Residues 623-639 (ADGHKDTGASSKEGKEK) show a composition bias toward basic and acidic residues. A phosphoserine mark is found at serine 718, serine 723, serine 733, serine 736, and serine 738. Basic and acidic residues predominate over residues 743 to 753 (ERGGPEREEKL). The C2H2-type; atypical zinc-finger motif lies at 759-784 (LACLLCRRQFPSKEALIRHQQLSGLH). Phosphoserine occurs at positions 781, 797, and 845. Positions 818–861 (AAERREKYGIPEPPEPKRRKYGGISTASVDFEQPTRDGLGSDNI) are disordered. One can recognise a G-patch domain in the interval 858-904 (SDNIGSRMLQAMGWKEGSGLGRKKQGIVTPIEAQTRVRGSGLGARGS). Arginine 902 is modified (omega-N-methylarginine).

As to quaternary structure, associates with the spliceosome. Component of a large chromatin remodeling complex, at least composed of MYSM1, PCAF, RBM10 and KIF11/TRIP5.

Its subcellular location is the nucleus. In terms of biological role, binds to ssRNA containing the consensus sequence 5'-AGGUAA-3'. May be involved in post-transcriptional processing, most probably in mRNA splicing. Binds to RNA homopolymers, with a preference for poly(G) and poly(U) and little for poly(A). May bind to specific miRNA hairpins. This chain is RNA-binding protein 10, found in Mus musculus (Mouse).